The sequence spans 142 residues: Midkine-B (142 aa).

The N-terminal stretch at 1-20 is a signal peptide; the sequence is MELRAFCVILLITILAVSSQ. Intrachain disulfides connect C36–C60, C44–C69, C51–C73, C83–C115, and C93–C125.

The protein belongs to the pleiotrophin family. As to expression, in adults, expression is highest in the brain, eye and bone, with lower expression in the heart and lung. Not expressed in the ovary. In the tailbud stage embryo, expressed in the head and tail regions as well as in the central nervous system (CNS).

It is found in the secreted. Its function is as follows. Secreted protein that functions as a cytokine and growth factor and mediates its signal through cell-surface proteoglycan and non-proteoglycan receptors. Binds cell-surface proteoglycan receptors via their chondroitin sulfate (CS) groups. Thereby regulates many processes like inflammatory response, cell proliferation, cell adhesion, cell growth, cell survival, tissue regeneration, cell differentiation and cell migration. Inhibits mesoderm formation and promotes neural formation during development. Plays a role in development of the neuromuscular junction (NMJ). Has antibacterial activity against both Gram-positive and Gram-negative bacteria. In Xenopus laevis (African clawed frog), this protein is Midkine-B (mdk-b).